A 308-amino-acid polypeptide reads, in one-letter code: uncharacterized protein (308 aa).

The next 5 membrane-spanning stretches (helical) occupy residues 46-66 (GISA…GVLQ), 82-102 (LLAA…LLWM), 159-179 (AAIG…FLIF), 190-210 (FFQV…IGVL), and 271-291 (LYLF…SLYF).

It belongs to the oxidase-dependent Fe transporter (OFeT) (TC 9.A.10.1) family.

The protein resides in the cell membrane. This is an uncharacterized protein from Synechocystis sp. (strain ATCC 27184 / PCC 6803 / Kazusa).